The following is a 550-amino-acid chain: Leucine-rich repeat LGI family member 2 (550 aa).

Positions 1–25 (MALWRGGGALGLLLLSAACLIPPSA) are cleaved as a signal peptide. Residues 26–62 (QVRRLARCPATCSCTKESIICVGSSWVPRIVPGDISS) form the LRRNT domain. The N-linked (GlcNAc...) asparagine glycan is linked to N67. LRR repeat units lie at residues 83–104 (SLQL…AFAG) and 107–128 (HLEY…AFRG). In terms of domain architecture, LRRCT spans 140–190 (NKFECDCKAKWLYLWLKMTNSTVSDVLCIGPPEYQEKKLNEVTSFDYECTT). Residue N159 is glycosylated (N-linked (GlcNAc...) asparagine). EAR repeat units follow at residues 224–266 (DFVV…EWDH), 270–312 (NFRS…KYDE), 316–363 (KFVK…KWNS), 365–408 (GFYS…QWNK), 412–455 (KFVP…RWNS), 457–499 (QFVE…QWDK), and 503–545 (QFKK…EHII). The N-linked (GlcNAc...) asparagine glycan is linked to N276. An N-linked (GlcNAc...) asparagine glycan is attached at N407.

In terms of tissue distribution, brain.

It localises to the secreted. Required for the development of soma-targeting inhibitory GABAergic synapses made by parvalbumin-positive basket cells. This Mus musculus (Mouse) protein is Leucine-rich repeat LGI family member 2 (Lgi2).